Here is a 466-residue protein sequence, read N- to C-terminus: Soluble pyridine nucleotide transhydrogenase (466 aa).

An FAD-binding site is contributed by 36-45 (ERYHNIGGGC).

Belongs to the class-I pyridine nucleotide-disulfide oxidoreductase family. Requires FAD as cofactor.

It is found in the cytoplasm. It carries out the reaction NAD(+) + NADPH = NADH + NADP(+). In terms of biological role, conversion of NADPH, generated by peripheral catabolic pathways, to NADH, which can enter the respiratory chain for energy generation. The sequence is that of Soluble pyridine nucleotide transhydrogenase from Erwinia tasmaniensis (strain DSM 17950 / CFBP 7177 / CIP 109463 / NCPPB 4357 / Et1/99).